The sequence spans 345 residues: Myb/SANT-like DNA-binding domain-containing protein 4 (345 aa).

Residues 4–77 enclose the Myb-like domain; that stretch reads LKRKRKSNFS…EVKRRYLDWR (74 aa). Lys9 participates in a covalent cross-link: Glycyl lysine isopeptide (Lys-Gly) (interchain with G-Cter in SUMO2). Ser106 carries the phosphoserine modification. Residues Lys114 and Lys142 each participate in a glycyl lysine isopeptide (Lys-Gly) (interchain with G-Cter in SUMO2) cross-link. Residues 143–175 are disordered; that stretch reads VEEEERDPQSPEFEIEEEEEMLSSVIPDSRREN. Position 188 is a phosphothreonine (Thr188). A coiled-coil region spans residues 203–345; that stretch reads LLVNIEKQKL…LRIQKEGHLQ (143 aa). Residues Lys237, Lys254, and Lys273 each participate in a glycyl lysine isopeptide (Lys-Gly) (interchain with G-Cter in SUMO2) cross-link.

The polypeptide is Myb/SANT-like DNA-binding domain-containing protein 4 (MSANTD4) (Homo sapiens (Human)).